A 177-amino-acid chain; its full sequence is Novel acetylcholine receptor chaperone (177 aa).

Residues 1-5 (MASPR) are Cytoplasmic-facing. The helical transmembrane segment at 6 to 26 (TVTVVALSVALGLFFVFMGTI) threads the bilayer. At 27–61 (KLTPRLSKDAYSEMKRAYKSYVRALPLLKKMGINS) the chain is on the lumenal side. Residues 43–54 (AYKSYVRALPLL) form an interaction with NGFR region. The helical transmembrane segment at 62-82 (ILLRKSIGALEVACGIVMTLV) threads the bilayer. Over 83 to 88 (PGRPKD) the chain is Cytoplasmic. The chain crosses the membrane as a helical span at residues 89-109 (VANFFLLLLVLAVLFFHQLVG). The Lumenal segment spans residues 110-114 (DPLKR). A helical transmembrane segment spans residues 115–132 (YAHALVFGILLTCRLLIA). Residues 133-177 (RKPEDRSSEKKSSPPGNAGSDGNAGNTEEQPSLYEKAPQGKMKLS) are Cytoplasmic-facing. Positions 136-177 (EDRSSEKKSSPPGNAGSDGNAGNTEEQPSLYEKAPQGKMKLS) are disordered.

Belongs to the DoxX family. In terms of assembly, may interact with NGFR. Interacts with RPN1, RPN2 and CANX.

It is found in the peroxisome membrane. Its subcellular location is the cytoplasmic vesicle. The protein localises to the endoplasmic reticulum membrane. Molecular chaperone which mediates the proper assembly and functional expression of the nicotinic acetylcholine receptors (nAChRs) throughout the brain. Essential for the proper folding, assembly, function and surface trafficking of alpha-7 (CHRNA7), alpha-4-beta-2, alpha-3-beta-2 and alpha-3-beta-4 receptors. Stably associates with ribophorin-1 (RPN1) and ribophorin-2 (RPN2) (components of the oligosaccharyl transferase (OST) complex) and with calnexin (CANX), both of which are critical for NACHO-mediated effects on CHRNA7 assembly and function. Facilitates the proper folding and assembly of alpha-6-beta-2 and alpha-6-beta-2-beta-3 receptors and acts at early stages of the nAChRs subunit assembly. Promotes the expression of the alpha-4(2):beta-2(3) stoichiometric form over the alpha-4(3):beta-2(2) form. The sequence is that of Novel acetylcholine receptor chaperone (TMEM35A) from Bos taurus (Bovine).